The sequence spans 310 residues: Ribosomal RNA small subunit methyltransferase H (310 aa).

S-adenosyl-L-methionine is bound by residues 40–42, aspartate 59, phenylalanine 89, aspartate 104, and glutamine 111; that span reads GGH.

Belongs to the methyltransferase superfamily. RsmH family.

It is found in the cytoplasm. The enzyme catalyses cytidine(1402) in 16S rRNA + S-adenosyl-L-methionine = N(4)-methylcytidine(1402) in 16S rRNA + S-adenosyl-L-homocysteine + H(+). Functionally, specifically methylates the N4 position of cytidine in position 1402 (C1402) of 16S rRNA. In Amoebophilus asiaticus (strain 5a2), this protein is Ribosomal RNA small subunit methyltransferase H.